The following is a 558-amino-acid chain: Formate--tetrahydrofolate ligase (558 aa).

66–73 (TPAGEGKT) lines the ATP pocket.

This sequence belongs to the formate--tetrahydrofolate ligase family.

The enzyme catalyses (6S)-5,6,7,8-tetrahydrofolate + formate + ATP = (6R)-10-formyltetrahydrofolate + ADP + phosphate. Its pathway is one-carbon metabolism; tetrahydrofolate interconversion. This is Formate--tetrahydrofolate ligase from Neisseria meningitidis serogroup A / serotype 4A (strain DSM 15465 / Z2491).